A 76-amino-acid polypeptide reads, in one-letter code: Small ribosomal subunit protein eS17 (76 aa).

The protein belongs to the eukaryotic ribosomal protein eS17 family.

The chain is Small ribosomal subunit protein eS17 from Metallosphaera sedula (strain ATCC 51363 / DSM 5348 / JCM 9185 / NBRC 15509 / TH2).